We begin with the raw amino-acid sequence, 299 residues long: 4-diphosphocytidyl-2-C-methyl-D-erythritol kinase (299 aa).

The active site involves K11. 94 to 104 (PQGGGLGGGSS) is an ATP binding site. The active site involves D136.

This sequence belongs to the GHMP kinase family. IspE subfamily.

It carries out the reaction 4-CDP-2-C-methyl-D-erythritol + ATP = 4-CDP-2-C-methyl-D-erythritol 2-phosphate + ADP + H(+). It functions in the pathway isoprenoid biosynthesis; isopentenyl diphosphate biosynthesis via DXP pathway; isopentenyl diphosphate from 1-deoxy-D-xylulose 5-phosphate: step 3/6. Catalyzes the phosphorylation of the position 2 hydroxy group of 4-diphosphocytidyl-2C-methyl-D-erythritol. The protein is 4-diphosphocytidyl-2-C-methyl-D-erythritol kinase of Bordetella pertussis (strain Tohama I / ATCC BAA-589 / NCTC 13251).